The chain runs to 218 residues: Adenylate kinase (218 aa).

10–15 lines the ATP pocket; sequence GAGKGT. The NMP stretch occupies residues 30–59; the sequence is STGDMLRAAVKAGSEMGLKAKAVMDAGQLV. AMP-binding positions include threonine 31, arginine 36, 57 to 59, 85 to 88, and glutamine 92; these read QLV and GFPR. The segment at 122–159 is LID; it reads GRRVHEASGRTYHLVYNPPKVEGKDDVTGEDLVQRADD. ATP is bound by residues arginine 123 and 132-133; that span reads TY. AMP is bound by residues arginine 156 and arginine 167. Glycine 203 provides a ligand contact to ATP.

It belongs to the adenylate kinase family. Monomer.

It localises to the cytoplasm. The catalysed reaction is AMP + ATP = 2 ADP. It participates in purine metabolism; AMP biosynthesis via salvage pathway; AMP from ADP: step 1/1. Catalyzes the reversible transfer of the terminal phosphate group between ATP and AMP. Plays an important role in cellular energy homeostasis and in adenine nucleotide metabolism. The polypeptide is Adenylate kinase (Marinomonas sp. (strain MWYL1)).